A 251-amino-acid polypeptide reads, in one-letter code: uncharacterized protein (251 aa).

In terms of domain architecture, AMMECR1 spans 21 to 246 (KGSSPFAFYA…ITYEEFNKQL (226 aa)).

This is an uncharacterized protein from Saccharomyces cerevisiae (strain ATCC 204508 / S288c) (Baker's yeast).